Here is a 32-residue protein sequence, read N- to C-terminus: Cytochrome c3, 10 kDa (32 aa).

Heme contacts are provided by His16, Cys25, Cys28, and His29.

In terms of assembly, monomer. Binds 1 heme group per subunit.

The protein localises to the periplasm. Participates in sulfate respiration coupled with phosphorylation by transferring electrons from the enzyme dehydrogenase to ferredoxin. This chain is Cytochrome c3, 10 kDa, found in Desulfuromonas acetoxidans (Chloropseudomonas ethylica).